Reading from the N-terminus, the 200-residue chain is Charged multivesicular body protein 6 (200 aa).

The N-myristoyl glycine moiety is linked to residue Gly2. A coiled-coil region spans residues 10-94; it reads RSRVTEQDKA…ERMVQDIEFT (85 aa). The Type-2 MIT-interacting motif signature appears at 168–179; the sequence is LELPDVPSEPLP. Residues 169 to 200 are disordered; it reads ELPDVPSEPLPEEPPEATPVKNRPKPELVAAS.

The protein belongs to the SNF7 family. Probable core component of the endosomal sorting required for transport complex III (ESCRT-III). ESCRT-III components are thought to multimerize to form a flat lattice on the perimeter membrane of the endosome.

The protein localises to the endomembrane system. It localises to the late endosome membrane. Its function is as follows. Probable core component of the endosomal sorting required for transport complex III (ESCRT-III) which is involved in multivesicular bodies (MVBs) formation and sorting of endosomal cargo proteins into MVBs. MVBs contain intraluminal vesicles (ILVs) that are generated by invagination and scission from the limiting membrane of the endosome and mostly are delivered to lysosomes enabling degradation of membrane proteins, such as stimulated growth factor receptors, lysosomal enzymes and lipids. In the ESCRT-III complex, it probably serves as an acceptor for the ESCRT-II complex on endosomal membranes. This chain is Charged multivesicular body protein 6 (CHMP6), found in Gallus gallus (Chicken).